The sequence spans 471 residues: Serine hydroxymethyltransferase 4 (471 aa).

N-acetylmethionine is present on Met1. Residue Ser39 coordinates L-serine. The pemetrexed site is built by Ser39, Tyr59, and Glu61. Positions 61 and 69 each coordinate L-serine. Pemetrexed is bound by residues 105-107 (SGS), His134, Ser190, and His218. 2 residues coordinate L-serine: His218 and Lys244. At Lys244 the chain carries N6-(pyridoxal phosphate)lysine. Gly290 contacts pemetrexed. Lys373 lines the methotrexate pocket. Arg389 lines the L-serine pocket. Pemetrexed is bound at residue Arg389.

It belongs to the SHMT family. In terms of assembly, homotetramer. Interacts with UBP16. Pyridoxal 5'-phosphate serves as cofactor. As to expression, mostly expressed in flowers, less abundant in roots, inflorescence stems, and siliques, and barely detectable in leaves.

It localises to the cytoplasm. The catalysed reaction is (6R)-5,10-methylene-5,6,7,8-tetrahydrofolate + glycine + H2O = (6S)-5,6,7,8-tetrahydrofolate + L-serine. It functions in the pathway one-carbon metabolism; tetrahydrofolate interconversion. With respect to regulation, inhibited by the antifolate drugs methotrexate and pemetrexed. Catalyzes the interconversion of serine and glycine with the conversion of tetrahydrofolate (THF) into 5,10-methylene-THF. In Arabidopsis thaliana (Mouse-ear cress), this protein is Serine hydroxymethyltransferase 4.